We begin with the raw amino-acid sequence, 346 residues long: uncharacterized protein (346 aa).

This is an uncharacterized protein from Borreliella burgdorferi (strain ATCC 35210 / DSM 4680 / CIP 102532 / B31) (Borrelia burgdorferi).